The following is a 463-amino-acid chain: Phosphoglycerate transporter protein (463 aa).

The Cytoplasmic portion of the chain corresponds to 1–29; that stretch reads MLTILKTGQSAHKVPPEKVQATYGRYRIQ. Transmembrane regions (helical) follow at residues 30 to 50, 59 to 79, 106 to 126, 127 to 147, 160 to 180, 188 to 208, 267 to 287, 297 to 317, 326 to 346, 349 to 369, 391 to 411, and 413 to 433; these read ALLSVFLGYLAYYIVRNNFTL, LDLSATQIGLLSSCMLIAYGI, IVNVGLGFSSAFWIFAALVVF, NGLFQGMGVGPSFITIANWFP, ISHNVGGGIVAPIVGAAFAIL, ASYIVPACVAVIFALIVLVLG, VFVYMVRFGMISWLPIYLLTV, VAFLFFEWAAIPSTLLAGWLS, MPLAMICMALIFVCLIGYWKS, LLMVTIFAAIVGCLIYVPQFL, GFMSYIFGASLGTSLFGVMVD, and LGWYGGFYLLMGGIVCCILFC.

Belongs to the major facilitator superfamily. Organophosphate:Pi antiporter (OPA) (TC 2.A.1.4) family.

The protein resides in the cell inner membrane. Its function is as follows. The phosphoglycerate transporter protein is a part of the PGT transport system. It is the membrane bound transporter for phosphoglycerate into salmonella. In Salmonella typhimurium (strain LT2 / SGSC1412 / ATCC 700720), this protein is Phosphoglycerate transporter protein (pgtP).